The primary structure comprises 377 residues: Alanine dehydrogenase (377 aa).

Substrate is bound by residues Arg15 and Lys74. His95 acts as the Proton donor/acceptor in catalysis. Residues Ser133, Asp197, Arg202, Ser219, 238 to 239, 266 to 269, and 304 to 307 contribute to the NAD(+) site; these read VL, VAID, and VGNM. The active-site Proton donor/acceptor is the Asp269.

It belongs to the AlaDH/PNT family. In terms of assembly, homohexamer.

It carries out the reaction L-alanine + NAD(+) + H2O = pyruvate + NH4(+) + NADH + H(+). Its pathway is organosulfur degradation; alkanesulfonate degradation. Its function is as follows. Involved in an anaerobic respiration pathway that converts the sulfonate taurine (2-aminoethanesulfonate) to ammonia, acetate and sulfide. Acts as an alanine dehydrogenase that regenerates pyruvate, the amino group acceptor for the taurine--pyruvate aminotransferase enzyme, and liberates ammonia. This chain is Alanine dehydrogenase, found in Bilophila wadsworthia (strain 3_1_6).